A 267-amino-acid chain; its full sequence is 4-hydroxy-tetrahydrodipicolinate reductase (267 aa).

NAD(+)-binding positions include 8–13 (GAAGRM) and Glu34. Arg35 provides a ligand contact to NADP(+). NAD(+) contacts are provided by residues 98–100 (GST) and 122–125 (APNM). His155 serves as the catalytic Proton donor/acceptor. His156 contacts (S)-2,3,4,5-tetrahydrodipicolinate. Lys159 serves as the catalytic Proton donor. 165 to 166 (GT) contributes to the (S)-2,3,4,5-tetrahydrodipicolinate binding site.

The protein belongs to the DapB family.

The protein resides in the cytoplasm. The catalysed reaction is (S)-2,3,4,5-tetrahydrodipicolinate + NAD(+) + H2O = (2S,4S)-4-hydroxy-2,3,4,5-tetrahydrodipicolinate + NADH + H(+). It catalyses the reaction (S)-2,3,4,5-tetrahydrodipicolinate + NADP(+) + H2O = (2S,4S)-4-hydroxy-2,3,4,5-tetrahydrodipicolinate + NADPH + H(+). Its pathway is amino-acid biosynthesis; L-lysine biosynthesis via DAP pathway; (S)-tetrahydrodipicolinate from L-aspartate: step 4/4. Catalyzes the conversion of 4-hydroxy-tetrahydrodipicolinate (HTPA) to tetrahydrodipicolinate. The polypeptide is 4-hydroxy-tetrahydrodipicolinate reductase (Geobacter sp. (strain M21)).